The following is a 154-amino-acid chain: Putative ankyrin repeat protein RBE_1220 (154 aa).

ANK repeat units lie at residues glutamate 78–glutamine 108 and asparagine 113–leucine 142.

This is Putative ankyrin repeat protein RBE_1220 from Rickettsia bellii (strain RML369-C).